A 298-amino-acid chain; its full sequence is MSVKPYIGRFAPSPSGELHFGSLIAALGSYLQARALKGQWLVRIEDIDPPREVPGAADAILRQLDHYGLHWDGEVLYQSQRHEAYREALAYLREHGLSYYCTCPRSRIQQLGGIYDGHCRALRHGPENAAVRLVQTHPVMAFTDKLRGDITADPALAREDFIIHRRDGLFAYNLAVVVDDHFQGVTEIVRGADLIEPTVRQISLYQQFGWQAPDYVHLPLVVNPDGNKLSKQNHAPPLPEGDPRPVLVEALAFLNQPVDDDWRALSTETLLRQAVEKWDLSAVPAAAAANPAFSNALR.

Residues 9–13 (RFAPS) and Glu45 each bind L-glutamate. The 'HIGH' region signature appears at 12-22 (PSPSGELHFGS). Zn(2+) contacts are provided by Cys101, Cys103, Tyr115, and Cys119. 2 residues coordinate L-glutamate: Tyr172 and Arg190. Positions 228–232 (KLSKQ) match the 'KMSKS' region motif. ATP is bound at residue Lys231.

Belongs to the class-I aminoacyl-tRNA synthetase family. GluQ subfamily. Zn(2+) is required as a cofactor.

Catalyzes the tRNA-independent activation of glutamate in presence of ATP and the subsequent transfer of glutamate onto a tRNA(Asp). Glutamate is transferred on the 2-amino-5-(4,5-dihydroxy-2-cyclopenten-1-yl) moiety of the queuosine in the wobble position of the QUC anticodon. The protein is Glutamyl-Q tRNA(Asp) synthetase of Cronobacter sakazakii (strain ATCC BAA-894) (Enterobacter sakazakii).